The following is a 164-amino-acid chain: Cell cycle link protein (164 aa).

The interval 9 to 22 is binding to host SKP1 protein; that stretch reads LPEELKEKIMNEHL. The LXCXE motif, interaction with host RBR motif lies at 111–115; sequence LYCSE.

Belongs to the nanovirus Clink protein family. As to quaternary structure, interacts with host SKP1. Interacts (via LXCXE domain) with host retinoblastoma-related protein 1 (RBR1). Interacts (via LXCXE domain) with retinoblastoma-related proteins (RBR).

Functionally, interacts with and disrupts the function of host retinoblastoma-related proteins RBR, which are key regulators of the cell cycle. Induces transcriptional activation of E2F-regulated S-phase and G2/M-phase-specific genes. Inactivation of the ability of RBR to arrest the cell cycle leads to the stimulation of viral DNA replication. This is Cell cycle link protein (DNA-C) from Trifolium subterraneum (Subterranean clover).